The chain runs to 299 residues: Sulfate adenylyltransferase subunit 2 (299 aa).

Belongs to the PAPS reductase family. CysD subfamily. In terms of assembly, heterodimer composed of CysD, the smaller subunit, and CysN.

The enzyme catalyses sulfate + ATP + H(+) = adenosine 5'-phosphosulfate + diphosphate. It participates in sulfur metabolism; hydrogen sulfide biosynthesis; sulfite from sulfate: step 1/3. Functionally, with CysN forms the ATP sulfurylase (ATPS) that catalyzes the adenylation of sulfate producing adenosine 5'-phosphosulfate (APS) and diphosphate, the first enzymatic step in sulfur assimilation pathway. APS synthesis involves the formation of a high-energy phosphoric-sulfuric acid anhydride bond driven by GTP hydrolysis by CysN coupled to ATP hydrolysis by CysD. The polypeptide is Sulfate adenylyltransferase subunit 2 (Colwellia psychrerythraea (strain 34H / ATCC BAA-681) (Vibrio psychroerythus)).